A 551-amino-acid chain; its full sequence is Inosine-5'-monophosphate dehydrogenase (551 aa).

CBS domains lie at 102–163 and 165–221; these read FILD…PLSE and MTSD…PLAS. NAD(+) is bound by residues 258-260 and 308-310; these read DSS and GMG. K(+) is bound by residues Gly310 and Gly312. Ser313 serves as a coordination point for IMP. Cys315 contributes to the K(+) binding site. Cys315 (thioimidate intermediate) is an active-site residue. Residues 349–351, 372–373, and 396–400 each bind IMP; these read DGG, GS, and YRGMG. Residues 407–462 are disordered; sequence AGTRRTASPPARGLRSPEASPSTAASSGGASRASALSEASPSAKSEASRTSTSTGS. A compositionally biased stretch (low complexity) spans 422–462; the sequence is SPEASPSTAASSGGASRASALSEASPSAKSEASRTSTSTGS. Arg465 acts as the Proton acceptor in catalysis. Gln477 lines the IMP pocket. Residues Glu536 and Gly537 each coordinate K(+).

This sequence belongs to the IMPDH/GMPR family. As to quaternary structure, homotetramer. The cofactor is K(+).

It is found in the cytoplasm. It carries out the reaction IMP + NAD(+) + H2O = XMP + NADH + H(+). The protein operates within purine metabolism; XMP biosynthesis via de novo pathway; XMP from IMP: step 1/1. Mycophenolic acid (MPA) is a non-competitive inhibitor that prevents formation of the closed enzyme conformation by binding to the same site as the amobile flap. In contrast, mizoribine monophosphate (MZP) is a competitive inhibitor that induces the closed conformation. MPA is a potent inhibitor of mammalian IMPDHs but a poor inhibitor of the bacterial enzymes. MZP is a more potent inhibitor of bacterial IMPDH. Potently inhibited by MPA and adenine dinucleotide analogs such as thiazole-4-carboxamide adenine dinucleotide (TAD). Catalyzes the conversion of inosine 5'-phosphate (IMP) to xanthosine 5'-phosphate (XMP), the first committed and rate-limiting step in the de novo synthesis of guanine nucleotides, and therefore plays an important role in the regulation of cell growth. The sequence is that of Inosine-5'-monophosphate dehydrogenase from Toxoplasma gondii.